Here is a 700-residue protein sequence, read N- to C-terminus: Polyribonucleotide nucleotidyltransferase (700 aa).

Residues Asp486 and Asp492 each coordinate Mg(2+). In terms of domain architecture, KH spans 554-613 (PKIISTTINPDKIREVIGPGGKMINKIIDETGVKIDINDDGRVYIFSSDIQAGKRARSMI). One can recognise an S1 motif domain in the interval 623 to 691 (GQVFLGRVIR…KQGRVNLSRK (69 aa)).

The protein belongs to the polyribonucleotide nucleotidyltransferase family. Mg(2+) is required as a cofactor.

It is found in the cytoplasm. It carries out the reaction RNA(n+1) + phosphate = RNA(n) + a ribonucleoside 5'-diphosphate. Functionally, involved in mRNA degradation. Catalyzes the phosphorolysis of single-stranded polyribonucleotides processively in the 3'- to 5'-direction. This is Polyribonucleotide nucleotidyltransferase from Acetivibrio thermocellus (strain ATCC 27405 / DSM 1237 / JCM 9322 / NBRC 103400 / NCIMB 10682 / NRRL B-4536 / VPI 7372) (Clostridium thermocellum).